The primary structure comprises 69 residues: U-Asilidin(12)-Dg3b (69 aa).

A signal peptide spans 1–19 (MRFLNIFLFFAVMIAFVSA). The propeptide occupies 20-33 (SPVLEEEEIDIEPR). Intrachain disulfides connect Cys-36/Cys-59, Cys-45/Cys-65, and Cys-49/Cys-67.

It belongs to the asilidin-12 family. As to expression, expressed by the venom gland.

It localises to the secreted. Its function is as follows. The recombinant peptide moderately increases Kv11.1/KCNH2/ERG1 currents and shifts the voltage-dependence of the channel activation to hyperpolarised potentials. In vivo, induces neurotoxic effects when injected into insects (tested on L.cuprina and A.domesticus). In Dolopus genitalis (Giant Australian assassin fly), this protein is U-Asilidin(12)-Dg3b.